Consider the following 181-residue polypeptide: NAD(P)H-quinone oxidoreductase subunit I, chloroplastic (181 aa).

2 4Fe-4S ferredoxin-type domains span residues 55-84 (GRIH…VDWE) and 95-124 (KNYS…MTEE). 8 residues coordinate [4Fe-4S] cluster: Cys-64, Cys-67, Cys-70, Cys-74, Cys-104, Cys-107, Cys-110, and Cys-114.

This sequence belongs to the complex I 23 kDa subunit family. As to quaternary structure, NDH is composed of at least 16 different subunits, 5 of which are encoded in the nucleus. It depends on [4Fe-4S] cluster as a cofactor.

It is found in the plastid. Its subcellular location is the chloroplast thylakoid membrane. It catalyses the reaction a plastoquinone + NADH + (n+1) H(+)(in) = a plastoquinol + NAD(+) + n H(+)(out). It carries out the reaction a plastoquinone + NADPH + (n+1) H(+)(in) = a plastoquinol + NADP(+) + n H(+)(out). In terms of biological role, NDH shuttles electrons from NAD(P)H:plastoquinone, via FMN and iron-sulfur (Fe-S) centers, to quinones in the photosynthetic chain and possibly in a chloroplast respiratory chain. The immediate electron acceptor for the enzyme in this species is believed to be plastoquinone. Couples the redox reaction to proton translocation, and thus conserves the redox energy in a proton gradient. In Angiopteris evecta (Mule's foot fern), this protein is NAD(P)H-quinone oxidoreductase subunit I, chloroplastic.